The following is a 429-amino-acid chain: Serum response factor-binding protein 1 (429 aa).

An N-acetylalanine modification is found at A2. Coiled coils occupy residues K42–E67 and L108–E146. Disordered stretches follow at residues A131–N157 and L176–D429. A compositionally biased stretch (polar residues) spans E146–N157. The span at N183 to P195 shows a compositional bias: basic and acidic residues. A Glycyl lysine isopeptide (Lys-Gly) (interchain with G-Cter in SUMO2) cross-link involves residue K190. Phosphoserine occurs at positions 203, 205, 264, 279, and 281. The span at G249–T265 shows a compositional bias: acidic residues. Residues K296 to E341 show a composition bias toward basic and acidic residues. Residue K316 forms a Glycyl lysine isopeptide (Lys-Gly) (interchain with G-Cter in SUMO2) linkage. 3 positions are modified to phosphoserine: S349, S351, and S367. The segment covering N357–S367 has biased composition (basic and acidic residues). Over residues N373–K383 the composition is skewed to polar residues.

Interacts with SRF. Forms complexes with SRF and SRF cofactors ARID2, MYOCD and NKX2-5. Interacts with the N-terminus of SLC2A4. In terms of tissue distribution, abundantly expressed in heart and skeletal muscle, and at much lower levels in brain and lung.

Its subcellular location is the cytoplasm. The protein localises to the perinuclear region. In terms of biological role, may be involved in regulating transcriptional activation of cardiac genes during the aging process. May play a role in biosynthesis and/or processing of SLC2A4 in adipose cells. The protein is Serum response factor-binding protein 1 of Homo sapiens (Human).